The following is a 190-amino-acid chain: MASFSTNEFKAGLKVMLDGNPCAILENEFVKPGKGQAFNRVKLRNLRSGKVLEQTFKSGDSLEAADVMDTEMNYLYNDGEFWHFMHPESFEQIQADKTAMSDSTKWLKENSNALCTITLFNGAPLSVTPPNFVELQITETDPGVRGDTSGGGGKPATLETGAVVRVPLFVQQGEVVRVDTRTGDYQTRVN.

Lys-34 carries the post-translational modification N6-(3,6-diaminohexanoyl)-5-hydroxylysine.

Belongs to the elongation factor P family. Post-translationally, may be beta-lysylated on the epsilon-amino group of Lys-34 by the combined action of EpmA and EpmB, and then hydroxylated on the C5 position of the same residue by EpmC (if this protein is present). Lysylation is critical for the stimulatory effect of EF-P on peptide-bond formation. The lysylation moiety may extend toward the peptidyltransferase center and stabilize the terminal 3-CCA end of the tRNA. Hydroxylation of the C5 position on Lys-34 may allow additional potential stabilizing hydrogen-bond interactions with the P-tRNA.

It is found in the cytoplasm. The protein operates within protein biosynthesis; polypeptide chain elongation. In terms of biological role, involved in peptide bond synthesis. Alleviates ribosome stalling that occurs when 3 or more consecutive Pro residues or the sequence PPG is present in a protein, possibly by augmenting the peptidyl transferase activity of the ribosome. Modification of Lys-34 is required for alleviation. This chain is Elongation factor P, found in Psychrobacter arcticus (strain DSM 17307 / VKM B-2377 / 273-4).